A 202-amino-acid chain; its full sequence is Holliday junction branch migration complex subunit RuvA (202 aa).

Residues 1 to 64 are domain I; it reads MIGRLRGSLA…EDAHLLYGFY (64 aa). Residues 65–143 form a domain II region; that stretch reads EKRERELFRE…AWESLPGTFT (79 aa). The tract at residues 144-153 is flexible linker; sequence LVSNGPNQAE. The tract at residues 154 to 202 is domain III; the sequence is PVASAESDAVSALISLGYKPQEASKAVSAIKEKDLSSADLIRRALKGMG.

It belongs to the RuvA family. In terms of assembly, homotetramer. Forms an RuvA(8)-RuvB(12)-Holliday junction (HJ) complex. HJ DNA is sandwiched between 2 RuvA tetramers; dsDNA enters through RuvA and exits via RuvB. An RuvB hexamer assembles on each DNA strand where it exits the tetramer. Each RuvB hexamer is contacted by two RuvA subunits (via domain III) on 2 adjacent RuvB subunits; this complex drives branch migration. In the full resolvosome a probable DNA-RuvA(4)-RuvB(12)-RuvC(2) complex forms which resolves the HJ.

It is found in the cytoplasm. Its function is as follows. The RuvA-RuvB-RuvC complex processes Holliday junction (HJ) DNA during genetic recombination and DNA repair, while the RuvA-RuvB complex plays an important role in the rescue of blocked DNA replication forks via replication fork reversal (RFR). RuvA specifically binds to HJ cruciform DNA, conferring on it an open structure. The RuvB hexamer acts as an ATP-dependent pump, pulling dsDNA into and through the RuvAB complex. HJ branch migration allows RuvC to scan DNA until it finds its consensus sequence, where it cleaves and resolves the cruciform DNA. This Pseudomonas savastanoi pv. phaseolicola (strain 1448A / Race 6) (Pseudomonas syringae pv. phaseolicola (strain 1448A / Race 6)) protein is Holliday junction branch migration complex subunit RuvA.